Reading from the N-terminus, the 678-residue chain is THO complex subunit 5 homolog A (678 aa).

Disordered stretches follow at residues 1–35 (MASD…YSEE) and 294–329 (ALFK…VQLD). The short motif at 7–10 (KKRK) is the Nuclear localization signal element. Over residues 14–35 (NRNEDVKRGRHEDQEGRYYSEE) the composition is skewed to basic and acidic residues. Residues 301–314 (DSQDDESDSDAEEE) are compositionally biased toward acidic residues.

This sequence belongs to the THOC5 family. In terms of assembly, component of the THO subcomplex, which is composed of thoc1, thoc2, thoc3, thoc5, thoc6 and thoc7. Component of the transcription/export (TREX) complex at least composed of alyref/thoc4, ddx39b, sarnp/cip29, chtop and the THO subcomplex. Interacts with thoc7.

The protein localises to the nucleus. The protein resides in the nucleus speckle. It localises to the cytoplasm. Its function is as follows. Component of the THO subcomplex of the TREX complex which is thought to couple mRNA transcription, processing and nuclear export, and which specifically associates with spliced mRNA and not with unspliced pre-mRNA. Plays a key structural role in the oligomerization of the THO-ddx39b complex. TREX is recruited to spliced mRNAs by a transcription-independent mechanism, binds to mRNA upstream of the exon-junction complex (EJC) and is recruited in a splicing- and cap-dependent manner to a region near the 5' end of the mRNA where it functions in mRNA export to the cytoplasm via the TAP/NXF1 pathway. May be involved in cell differentiation. The protein is THO complex subunit 5 homolog A (thoc5-a) of Xenopus laevis (African clawed frog).